The sequence spans 505 residues: 4-alpha-glucanotransferase (505 aa).

This sequence belongs to the disproportionating enzyme family.

Its subcellular location is the cytoplasm. It carries out the reaction Transfers a segment of a (1-&gt;4)-alpha-D-glucan to a new position in an acceptor, which may be glucose or a (1-&gt;4)-alpha-D-glucan.. The protein is 4-alpha-glucanotransferase (malQ) of Streptococcus pneumoniae serotype 4 (strain ATCC BAA-334 / TIGR4).